A 310-amino-acid chain; its full sequence is UDP-N-acetylenolpyruvoylglucosamine reductase (310 aa).

An FAD-binding PCMH-type domain is found at 35 to 203 (RAGGAAEALV…TRVRFALRKG (169 aa)). Arg183 is a catalytic residue. Residue Ser232 is the Proton donor of the active site. Glu302 is an active-site residue.

The protein belongs to the MurB family. FAD is required as a cofactor.

The protein resides in the cytoplasm. The catalysed reaction is UDP-N-acetyl-alpha-D-muramate + NADP(+) = UDP-N-acetyl-3-O-(1-carboxyvinyl)-alpha-D-glucosamine + NADPH + H(+). It functions in the pathway cell wall biogenesis; peptidoglycan biosynthesis. Its function is as follows. Cell wall formation. In Myxococcus xanthus (strain DK1622), this protein is UDP-N-acetylenolpyruvoylglucosamine reductase.